The sequence spans 314 residues: ATP synthase gamma chain (314 aa).

Belongs to the ATPase gamma chain family. F-type ATPases have 2 components, CF(1) - the catalytic core - and CF(0) - the membrane proton channel. CF(1) has five subunits: alpha(3), beta(3), gamma(1), delta(1), epsilon(1). CF(0) has three main subunits: a, b and c.

The protein resides in the cell inner membrane. Produces ATP from ADP in the presence of a proton gradient across the membrane. The gamma chain is believed to be important in regulating ATPase activity and the flow of protons through the CF(0) complex. This chain is ATP synthase gamma chain, found in Gloeobacter violaceus (strain ATCC 29082 / PCC 7421).